The primary structure comprises 152 residues: Large ribosomal subunit protein bL9 (152 aa).

It belongs to the bacterial ribosomal protein bL9 family.

In terms of biological role, binds to the 23S rRNA. The chain is Large ribosomal subunit protein bL9 from Mycobacterium avium (strain 104).